The chain runs to 1322 residues: Phosphoribosylformylglycinamidine synthase (1322 aa).

ATP-binding positions include 307-318 and alanine 678; that span reads GASTGSGGEIRD. Glutamate 718, asparagine 722, and aspartate 886 together coordinate Mg(2+). One can recognise a Glutamine amidotransferase type-1 domain in the interval 1069 to 1322; the sequence is MAILREQGVN…MFRNARVNLG (254 aa). Cysteine 1162 serves as the catalytic Nucleophile. Catalysis depends on residues histidine 1287 and glutamate 1289.

In the N-terminal section; belongs to the FGAMS family. Monomer.

Its subcellular location is the cytoplasm. It catalyses the reaction N(2)-formyl-N(1)-(5-phospho-beta-D-ribosyl)glycinamide + L-glutamine + ATP + H2O = 2-formamido-N(1)-(5-O-phospho-beta-D-ribosyl)acetamidine + L-glutamate + ADP + phosphate + H(+). Its pathway is purine metabolism; IMP biosynthesis via de novo pathway; 5-amino-1-(5-phospho-D-ribosyl)imidazole from N(2)-formyl-N(1)-(5-phospho-D-ribosyl)glycinamide: step 1/2. Its function is as follows. Phosphoribosylformylglycinamidine synthase involved in the purines biosynthetic pathway. Catalyzes the ATP-dependent conversion of formylglycinamide ribonucleotide (FGAR) and glutamine to yield formylglycinamidine ribonucleotide (FGAM) and glutamate. This chain is Phosphoribosylformylglycinamidine synthase, found in Photobacterium profundum (strain SS9).